Reading from the N-terminus, the 547-residue chain is Chaperonin GroEL 1 (547 aa).

ATP is bound by residues 30-33, lysine 51, 87-91, glycine 415, 479-481, and aspartate 495; these read TLGP, DGTTT, and NAA.

The protein belongs to the chaperonin (HSP60) family. As to quaternary structure, forms a cylinder of 14 subunits composed of two heptameric rings stacked back-to-back. Interacts with the co-chaperonin GroES.

The protein localises to the cytoplasm. It carries out the reaction ATP + H2O + a folded polypeptide = ADP + phosphate + an unfolded polypeptide.. Together with its co-chaperonin GroES, plays an essential role in assisting protein folding. The GroEL-GroES system forms a nano-cage that allows encapsulation of the non-native substrate proteins and provides a physical environment optimized to promote and accelerate protein folding. This Vibrio parahaemolyticus serotype O3:K6 (strain RIMD 2210633) protein is Chaperonin GroEL 1.